The primary structure comprises 142 residues: HTH-type transcriptional regulator MntR (142 aa).

In terms of domain architecture, HTH dtxR-type spans 1-63 (MTTPSMEDYI…YEKYRGLVLT (63 aa)). Residues aspartate 8, glutamate 11, histidine 77, glutamate 99, glutamate 102, and histidine 103 each contribute to the Mn(2+) site.

This sequence belongs to the DtxR/MntR family. In terms of assembly, homodimer.

It is found in the cytoplasm. DNA binding is strongly activated by Mn(2+). Functionally, central regulator of manganese homeostasis. This is HTH-type transcriptional regulator MntR from Bacillus velezensis (strain DSM 23117 / BGSC 10A6 / LMG 26770 / FZB42) (Bacillus amyloliquefaciens subsp. plantarum).